A 704-amino-acid polypeptide reads, in one-letter code: Elongation factor G (704 aa).

One can recognise a tr-type G domain in the interval 8 to 291 (DKVRNIGIMA…AVVDYLASPL (284 aa)). Residues 17–24 (AHIDAGKT), 90–94 (DTPGH), and 144–147 (NKMD) contribute to the GTP site.

Belongs to the TRAFAC class translation factor GTPase superfamily. Classic translation factor GTPase family. EF-G/EF-2 subfamily.

It is found in the cytoplasm. In terms of biological role, catalyzes the GTP-dependent ribosomal translocation step during translation elongation. During this step, the ribosome changes from the pre-translocational (PRE) to the post-translocational (POST) state as the newly formed A-site-bound peptidyl-tRNA and P-site-bound deacylated tRNA move to the P and E sites, respectively. Catalyzes the coordinated movement of the two tRNA molecules, the mRNA and conformational changes in the ribosome. The polypeptide is Elongation factor G (Chlorobium phaeovibrioides (strain DSM 265 / 1930) (Prosthecochloris vibrioformis (strain DSM 265))).